We begin with the raw amino-acid sequence, 725 residues long: Ribosomal RNA large subunit methyltransferase K/L (725 aa).

A THUMP domain is found at 46-157; sequence VAYRLCLWSR…RGEAVLSLDL (112 aa).

This sequence belongs to the methyltransferase superfamily. RlmKL family.

It is found in the cytoplasm. The enzyme catalyses guanosine(2445) in 23S rRNA + S-adenosyl-L-methionine = N(2)-methylguanosine(2445) in 23S rRNA + S-adenosyl-L-homocysteine + H(+). It carries out the reaction guanosine(2069) in 23S rRNA + S-adenosyl-L-methionine = N(2)-methylguanosine(2069) in 23S rRNA + S-adenosyl-L-homocysteine + H(+). Its function is as follows. Specifically methylates the guanine in position 2445 (m2G2445) and the guanine in position 2069 (m7G2069) of 23S rRNA. The protein is Ribosomal RNA large subunit methyltransferase K/L of Ectopseudomonas mendocina (strain ymp) (Pseudomonas mendocina).